Consider the following 651-residue polypeptide: Probable potassium transport system protein Kup (651 aa).

The span at Met-1–Asp-16 shows a compositional bias: basic and acidic residues. A disordered region spans residues Met-1–Ser-31. The next 12 helical transmembrane spans lie at Phe-38–Leu-58, Val-74–Val-94, Leu-129–Thr-149, Leu-168–Ser-188, Ala-197–Ile-217, Ala-232–Leu-252, Trp-276–Leu-296, Leu-309–Ala-329, Ile-366–Phe-386, Tyr-396–Trp-416, Pro-423–Ala-443, and Leu-448–Thr-468.

It belongs to the HAK/KUP transporter (TC 2.A.72) family.

It is found in the cell inner membrane. It carries out the reaction K(+)(in) + H(+)(in) = K(+)(out) + H(+)(out). Functionally, transport of potassium into the cell. Likely operates as a K(+):H(+) symporter. This Nitrobacter winogradskyi (strain ATCC 25391 / DSM 10237 / CIP 104748 / NCIMB 11846 / Nb-255) protein is Probable potassium transport system protein Kup.